The primary structure comprises 291 residues: Pituitary-specific positive transcription factor 1 (291 aa).

The short motif at 5–13 (AFTSADTFI) is the 9aaTAD element. The 75-residue stretch at 124-198 (MDSPEIRELE…ILSKWLEEAE (75 aa)) folds into the POU-specific domain. The homeobox DNA-binding region spans 214–273 (KRKRRTTISIAAKDALERHFGEQNKPSSQEIMRMAEELNLEKEVVRVWFCNRRQREKRVK).

This sequence belongs to the POU transcription factor family. Class-1 subfamily. As to quaternary structure, interacts with PITX1. Interacts with LHX3. Interacts with ELK1.

It is found in the nucleus. Functionally, transcription factor involved in the specification of the lactotrope, somatotrope, and thyrotrope phenotypes in the developing anterior pituitary. Specifically binds to the consensus sequence 5'-TAAAT-3'. Activates growth hormone and prolactin genes. This is Pituitary-specific positive transcription factor 1 (POU1F1) from Homo sapiens (Human).